Consider the following 624-residue polypeptide: Diatom spindle kinesin-1 (624 aa).

A disordered region spans residues 1–59; the sequence is MNAANRRKSTSTVGITGRKDATRMKIEQMEKERKERRKTMMQRKEARKQEHMKNIEAGN. Residues 1–85 are globular; it reads MNAANRRKST…QENKIGDKSP (85 aa). 2 stretches are compositionally biased toward basic and acidic residues: residues 17–33 and 42–54; these read GRKDATRMKIEQMEKER and QRKEARKQEHMKN. The 317-residue stretch at 95-411 folds into the Kinesin motor domain; the sequence is NICIAVRKRP…LRYADRIKEQ (317 aa). 186 to 193 contacts ATP; it reads GQTGSGKT. A coiled-coil region spans residues 426 to 624; that stretch reads SNREIMPSKE…LARQVQLTQY (199 aa). Residues 478-511 show a composition bias toward acidic residues; that stretch reads VDEEEADDEEGDYEEESEDLDYEDSEGQDYEEAV. A disordered region spans residues 478–528; it reads VDEEEADDEEGDYEEESEDLDYEDSEGQDYEEAVESQYDHSQEAQEGEEEL.

The protein belongs to the TRAFAC class myosin-kinesin ATPase superfamily. Kinesin family. MCAK/KIF2 subfamily.

It is found in the cytoplasm. It localises to the cytoskeleton. Its function is as follows. Involved in anaphase spindle elongation. The sequence is that of Diatom spindle kinesin-1 (DSK1) from Cylindrotheca fusiformis (Marine diatom).